A 405-amino-acid polypeptide reads, in one-letter code: MAVGLGPLSTLHPVPGFELGIASAGIKRPGRKDVVVMRCAEGSSVAGVFTLNAFCAAPVTLAKQRFLGEVRYLLTNTGNANAGTGEAGLAAAAQTCAKLAELAGVAETSVLPYSTGVIGEPLPVAKIEAALPAALADLAEDRWAEAAAGIMTTDTLPKGASRQFVHDGVTVTVTGISKGAGMIKPNMATMLGYIATDAKVAQGVLQDLLRDAANKSFNRITIDGDTSTNDCCMLIATGRAALPEVTQASGALFAALKQAVLEVSMELAQAIVRDGEGATKFVTVQVNGGATHQECLDVGYAVAHSPLIKTALFASDPNWGRILAAVGRAGVANLDVSKIDVFLGDVCIASRGGRAASYTEEQGAAVMAQAEIGIRIELGRGTCSETIWTTDLSHEYVKINAEYRT.

Substrate is bound by residues threonine 152, lysine 178, threonine 189, glutamate 276, asparagine 400, and threonine 405. Catalysis depends on threonine 189, which acts as the Nucleophile.

Belongs to the ArgJ family. As to quaternary structure, heterotetramer of two alpha and two beta chains.

The protein resides in the cytoplasm. It carries out the reaction N(2)-acetyl-L-ornithine + L-glutamate = N-acetyl-L-glutamate + L-ornithine. The enzyme catalyses L-glutamate + acetyl-CoA = N-acetyl-L-glutamate + CoA + H(+). It functions in the pathway amino-acid biosynthesis; L-arginine biosynthesis; L-ornithine and N-acetyl-L-glutamate from L-glutamate and N(2)-acetyl-L-ornithine (cyclic): step 1/1. Its pathway is amino-acid biosynthesis; L-arginine biosynthesis; N(2)-acetyl-L-ornithine from L-glutamate: step 1/4. Its function is as follows. Catalyzes two activities which are involved in the cyclic version of arginine biosynthesis: the synthesis of N-acetylglutamate from glutamate and acetyl-CoA as the acetyl donor, and of ornithine by transacetylation between N(2)-acetylornithine and glutamate. In Pseudomonas aeruginosa (strain ATCC 15692 / DSM 22644 / CIP 104116 / JCM 14847 / LMG 12228 / 1C / PRS 101 / PAO1), this protein is Arginine biosynthesis bifunctional protein ArgJ.